The primary structure comprises 84 residues: Small ribosomal subunit protein uS17 (84 aa).

Belongs to the universal ribosomal protein uS17 family. As to quaternary structure, part of the 30S ribosomal subunit.

One of the primary rRNA binding proteins, it binds specifically to the 5'-end of 16S ribosomal RNA. In Borrelia duttonii (strain Ly), this protein is Small ribosomal subunit protein uS17.